Reading from the N-terminus, the 344-residue chain is GTPase Obg (344 aa).

One can recognise an Obg domain in the interval 1–159; the sequence is MKFLDLAKVY…RTIWLRLKLI (159 aa). Residues 160-327 enclose the OBG-type G domain; that stretch reads ADVGLLGLPN…VLRALRARID (168 aa). Residues 166–173, 191–195, 212–215, 279–282, and 308–310 each bind GTP; these read GLPNAGKS, FTTLH, DIPG, NKID, and SGA. Residues Ser173 and Thr193 each contribute to the Mg(2+) site.

The protein belongs to the TRAFAC class OBG-HflX-like GTPase superfamily. OBG GTPase family. In terms of assembly, monomer. The cofactor is Mg(2+).

It is found in the cytoplasm. An essential GTPase which binds GTP, GDP and possibly (p)ppGpp with moderate affinity, with high nucleotide exchange rates and a fairly low GTP hydrolysis rate. Plays a role in control of the cell cycle, stress response, ribosome biogenesis and in those bacteria that undergo differentiation, in morphogenesis control. The chain is GTPase Obg from Ruegeria pomeroyi (strain ATCC 700808 / DSM 15171 / DSS-3) (Silicibacter pomeroyi).